Here is a 426-residue protein sequence, read N- to C-terminus: Serine--tRNA ligase (426 aa).

Position 233–235 (233–235 (TAE)) interacts with L-serine. Position 264–266 (264–266 (RSE)) interacts with ATP. Residue Glu287 coordinates L-serine. ATP is bound at residue 351 to 354 (EISS). An L-serine-binding site is contributed by Ser387.

Belongs to the class-II aminoacyl-tRNA synthetase family. Type-1 seryl-tRNA synthetase subfamily. Homodimer. The tRNA molecule binds across the dimer.

The protein resides in the cytoplasm. It carries out the reaction tRNA(Ser) + L-serine + ATP = L-seryl-tRNA(Ser) + AMP + diphosphate + H(+). The catalysed reaction is tRNA(Sec) + L-serine + ATP = L-seryl-tRNA(Sec) + AMP + diphosphate + H(+). It participates in aminoacyl-tRNA biosynthesis; selenocysteinyl-tRNA(Sec) biosynthesis; L-seryl-tRNA(Sec) from L-serine and tRNA(Sec): step 1/1. Functionally, catalyzes the attachment of serine to tRNA(Ser). Is also able to aminoacylate tRNA(Sec) with serine, to form the misacylated tRNA L-seryl-tRNA(Sec), which will be further converted into selenocysteinyl-tRNA(Sec). This chain is Serine--tRNA ligase, found in Clostridium tetani (strain Massachusetts / E88).